Consider the following 442-residue polypeptide: ATP-dependent protease ATPase subunit HslU (442 aa).

ATP contacts are provided by residues isoleucine 18, glycine 60–glutamate 65, aspartate 255, glutamate 320, and arginine 392.

It belongs to the ClpX chaperone family. HslU subfamily. As to quaternary structure, a double ring-shaped homohexamer of HslV is capped on each side by a ring-shaped HslU homohexamer. The assembly of the HslU/HslV complex is dependent on binding of ATP.

The protein resides in the cytoplasm. Its function is as follows. ATPase subunit of a proteasome-like degradation complex; this subunit has chaperone activity. The binding of ATP and its subsequent hydrolysis by HslU are essential for unfolding of protein substrates subsequently hydrolyzed by HslV. HslU recognizes the N-terminal part of its protein substrates and unfolds these before they are guided to HslV for hydrolysis. In Aeromonas salmonicida (strain A449), this protein is ATP-dependent protease ATPase subunit HslU.